Reading from the N-terminus, the 156-residue chain is Snaclec trimecetin subunit alpha (156 aa).

Positions 1 to 23 are cleaved as a signal peptide; that stretch reads MGRFIFVSFGLLVVFLSLSGTGA. 3 disulfide bridges follow: C25/C36, C53/C150, and C125/C142. The C-type lectin domain occupies 32–151; sequence FRRYCYKPFK…CGERNLFMCK (120 aa).

It belongs to the snaclec family. Heterodimer of subunits alpha and beta; disulfide-linked. Expressed by the venom gland.

It is found in the secreted. In terms of biological role, snaclec that induces platelet aggregation in either human platelet rich plasma (PRP) or washed platelet suspensions. It causes aggregation in a dose-dependent manner even in the absence of various platelet agonists such as ADP or von Willebrand factor (vWF). Interestingly, it does not induce aggregation in rabbit PRP. A monoclonal antibody against the platelet GPIb receptor blocks the aggregation induced by trimecetin, suggesting that it acts by binding to GPIb (GP1BA/GP1BB). In Protobothrops mucrosquamatus (Taiwan habu), this protein is Snaclec trimecetin subunit alpha.